A 393-amino-acid chain; its full sequence is Matrix metalloproteinase-23 (393 aa).

Residues Met-1–Gln-20 are Cytoplasmic-facing. Positions Met-1 to Arg-81 are excised as a propeptide. The helical; Signal-anchor for type II membrane protein transmembrane segment at Leu-21–Gly-41 threads the bilayer. The Lumenal portion of the chain corresponds to Thr-42–Ser-393. The tract at residues Thr-60 to Arg-79 is disordered. 2 N-linked (GlcNAc...) asparagine glycosylation sites follow: Asn-95 and Asn-151. Residue His-214 coordinates Zn(2+). Residue Glu-215 is part of the active site. 2 residues coordinate Zn(2+): His-218 and His-224. The N-linked (GlcNAc...) asparagine glycan is linked to Asn-235. Residues Cys-258–Cys-292 form the ShKT domain. Disulfide bonds link Cys-258/Cys-292, Cys-265/Cys-285, and Cys-274/Cys-289. Positions Pro-298–Ser-383 constitute an Ig-like C2-type domain. The N-linked (GlcNAc...) asparagine glycan is linked to Asn-319. Residues Cys-324 and Cys-373 are joined by a disulfide bond.

The protein belongs to the peptidase M10A family. It depends on Zn(2+) as a cofactor. In terms of processing, N-glycosylated. Proteolytic cleavage might yield an active form.

It is found in the membrane. The protein resides in the endoplasmic reticulum membrane. Its function is as follows. Protease. May regulate the surface expression of some potassium channels by retaining them in the endoplasmic reticulum. This Bos taurus (Bovine) protein is Matrix metalloproteinase-23 (MMP23).